We begin with the raw amino-acid sequence, 417 residues long: Mast cell carboxypeptidase A (417 aa).

The first 15 residues, 1–15 (MRLILPVGLIATTLA), serve as a signal peptide directing secretion. Positions 16-109 (IAPVRFDREK…IEKQFDVKED (94 aa)) are cleaved as a propeptide — activation peptide. In terms of domain architecture, Peptidase M14 spans 118-412 (KYNNWEKIVA…LAVKFIAKYI (295 aa)). 2 disulfides stabilise this stretch: Cys173–Cys186 and Cys245–Cys268. His176 and Glu179 together coordinate Zn(2+). His304 contributes to the Zn(2+) binding site. Glu378 functions as the Proton donor/acceptor in the catalytic mechanism.

Belongs to the peptidase M14 family. Requires Zn(2+) as cofactor.

Its subcellular location is the cytoplasmic vesicle. The protein resides in the secretory vesicle. It carries out the reaction Release of a C-terminal amino acid, but little or no action with -Asp, -Glu, -Arg, -Lys or -Pro.. The polypeptide is Mast cell carboxypeptidase A (CPA3) (Homo sapiens (Human)).